The primary structure comprises 201 residues: Recombination protein RecR (201 aa).

The segment at 57 to 72 (CADCRTFTEQEVCNIC) adopts a C4-type zinc-finger fold. A Toprim domain is found at 81–176 (GQICVVESPA…EASRIAHGVP (96 aa)).

Belongs to the RecR family.

In terms of biological role, may play a role in DNA repair. It seems to be involved in an RecBC-independent recombinational process of DNA repair. It may act with RecF and RecO. In Shigella boydii serotype 4 (strain Sb227), this protein is Recombination protein RecR.